A 56-amino-acid chain; its full sequence is Large ribosomal subunit protein bL33 (56 aa).

It belongs to the bacterial ribosomal protein bL33 family.

The chain is Large ribosomal subunit protein bL33 from Haemophilus influenzae (strain 86-028NP).